The sequence spans 182 residues: NADH-quinone oxidoreductase subunit I (182 aa).

4Fe-4S ferredoxin-type domains are found at residues 50–82 (IILS…LQKA) and 92–121 (EFFR…MTPD). Residues cysteine 62, cysteine 65, cysteine 68, cysteine 72, cysteine 101, cysteine 104, cysteine 107, and cysteine 111 each contribute to the [4Fe-4S] cluster site.

It belongs to the complex I 23 kDa subunit family. As to quaternary structure, NDH-1 is composed of 14 different subunits. Subunits NuoA, H, J, K, L, M, N constitute the membrane sector of the complex. It depends on [4Fe-4S] cluster as a cofactor.

The protein resides in the cell inner membrane. The catalysed reaction is a quinone + NADH + 5 H(+)(in) = a quinol + NAD(+) + 4 H(+)(out). Its function is as follows. NDH-1 shuttles electrons from NADH, via FMN and iron-sulfur (Fe-S) centers, to quinones in the respiratory chain. The immediate electron acceptor for the enzyme in this species is believed to be ubiquinone. Couples the redox reaction to proton translocation (for every two electrons transferred, four hydrogen ions are translocated across the cytoplasmic membrane), and thus conserves the redox energy in a proton gradient. This is NADH-quinone oxidoreductase subunit I from Psychrobacter arcticus (strain DSM 17307 / VKM B-2377 / 273-4).